Consider the following 364-residue polypeptide: Putative zinc metalloprotease all3971 (364 aa).

His-17 is a Zn(2+) binding site. Glu-18 is an active-site residue. A Zn(2+)-binding site is contributed by His-21. The next 3 membrane-spanning stretches (helical) occupy residues 92–114 (AIVISAGVIANLIFAYMLLLAQV), 281–303 (LFFFAALISINLAVINILPLPAL), and 329–346 (VMQTGLVLLLGLGIFLIV). Residues 103–188 (LIFAYMLLLA…KSIQLTVARG (86 aa)) enclose the PDZ domain.

The protein belongs to the peptidase M50B family. Requires Zn(2+) as cofactor.

The protein resides in the cell inner membrane. This chain is Putative zinc metalloprotease all3971, found in Nostoc sp. (strain PCC 7120 / SAG 25.82 / UTEX 2576).